Here is a 192-residue protein sequence, read N- to C-terminus: NADH-ubiquinone oxidoreductase subunit 9 (192 aa).

This sequence belongs to the complex I 30 kDa subunit family. In terms of assembly, complex I is composed of about 30 different subunits.

It localises to the mitochondrion inner membrane. It catalyses the reaction a ubiquinone + NADH + 5 H(+)(in) = a ubiquinol + NAD(+) + 4 H(+)(out). Core subunit of the mitochondrial membrane respiratory chain NADH dehydrogenase (Complex I) that is believed to belong to the minimal assembly required for catalysis. Complex I functions in the transfer of electrons from NADH to the respiratory chain. The immediate electron acceptor for the enzyme is believed to be ubiquinone. The protein is NADH-ubiquinone oxidoreductase subunit 9 (NAD9) of Prototheca wickerhamii.